A 207-amino-acid polypeptide reads, in one-letter code: Large ribosomal subunit protein bL25 (207 aa).

The tract at residues 1–20 (MANHQIKAQRRKDEGKGASR) is disordered.

The protein belongs to the bacterial ribosomal protein bL25 family. CTC subfamily. In terms of assembly, part of the 50S ribosomal subunit; part of the 5S rRNA/L5/L18/L25 subcomplex. Contacts the 5S rRNA. Binds to the 5S rRNA independently of L5 and L18.

This is one of the proteins that binds to the 5S RNA in the ribosome where it forms part of the central protuberance. The polypeptide is Large ribosomal subunit protein bL25 (Xylella fastidiosa (strain M23)).